The sequence spans 391 residues: Putative gustatory receptor 98a (391 aa).

Topologically, residues 1–31 (MEQMSGELHAASLLYMRRLMKCLGMLPFGQN) are cytoplasmic. Residues 32-52 (LFSKGFCYVLLFVSLGFSSYW) traverse the membrane as a helical segment. Residues 53 to 74 (RFSFDYEFDYDFLNDRFSSTID) lie on the Extracellular side of the membrane. Residues 75–95 (LSNFVALVLGHAIIVLELLWG) form a helical membrane-spanning segment. Residues 96–128 (NCSKDVDRQLQAIHSQIKLQLGTSNSTDRVRRY) are Cytoplasmic-facing. The helical transmembrane segment at 129-149 (CNWIYGSLIIRWLIFIVVTIY) threads the bilayer. At 150–173 (SNRALTINATYSELVFLARFSEFT) the chain is on the extracellular side. The N-linked (GlcNAc...) asparagine glycan is linked to Asn-157. The chain crosses the membrane as a helical span at residues 174-194 (LYCAVILFIYQELIVGGSNVL). Over 195-239 (DELYRTRYEMWSIRRLSLQKLAKLQAIHNSLWQAIRCLECYFQLS) the chain is Cytoplasmic. The chain crosses the membrane as a helical span at residues 240-260 (LITLLMKFFIDTSALPYWLYL). Over 261-272 (SRVEHTRVAVQH) the chain is Extracellular. The chain crosses the membrane as a helical span at residues 273–293 (YVATVECIKLLEIVVPCYLCT). Residues 294–347 (RCDAMQRKFLSMFYTVTTDRRSSQLNAALRSLNLQLSQEKYKFSAGGMVDINTE) are Cytoplasmic-facing. The chain crosses the membrane as a helical span at residues 348 to 368 (MLGKFFFGMISYIVICIQFSI). The Extracellular segment spans residues 369 to 391 (NFRAKKMSNEQMSQNITSTSAPI). N-linked (GlcNAc...) asparagine glycosylation occurs at Asn-383.

Belongs to the insect chemoreceptor superfamily. Gustatory receptor (GR) family. Gr2a subfamily.

The protein localises to the cell membrane. Functionally, probable gustatory receptor which mediates acceptance or avoidance behavior, depending on its substrates. This Drosophila melanogaster (Fruit fly) protein is Putative gustatory receptor 98a (Gr98a).